We begin with the raw amino-acid sequence, 201 residues long: 3-isopropylmalate dehydratase small subunit (201 aa).

It belongs to the LeuD family. LeuD type 1 subfamily. Heterodimer of LeuC and LeuD.

The enzyme catalyses (2R,3S)-3-isopropylmalate = (2S)-2-isopropylmalate. It functions in the pathway amino-acid biosynthesis; L-leucine biosynthesis; L-leucine from 3-methyl-2-oxobutanoate: step 2/4. Functionally, catalyzes the isomerization between 2-isopropylmalate and 3-isopropylmalate, via the formation of 2-isopropylmaleate. The protein is 3-isopropylmalate dehydratase small subunit of Chloroflexus aurantiacus (strain ATCC 29366 / DSM 635 / J-10-fl).